The chain runs to 443 residues: Xaa-Pro dipeptidase (443 aa).

Asp246, Asp257, His339, Glu384, and Glu423 together coordinate Mn(2+).

The protein belongs to the peptidase M24B family. Bacterial-type prolidase subfamily. Mn(2+) serves as cofactor.

The catalysed reaction is Xaa-L-Pro dipeptide + H2O = an L-alpha-amino acid + L-proline. Functionally, splits dipeptides with a prolyl residue in the C-terminal position. The chain is Xaa-Pro dipeptidase from Shigella flexneri.